The following is a 445-amino-acid chain: 3-phosphoshikimate 1-carboxyvinyltransferase (445 aa).

The disordered stretch occupies residues 1–25 (MSGHGPAQPMTARRSGPLKGRAEIP). 3-phosphoshikimate contacts are provided by Lys28, Ser29, and Arg33. A phosphoenolpyruvate-binding site is contributed by Lys28. Phosphoenolpyruvate-binding residues include Gly101 and Arg129. The 3-phosphoshikimate site is built by Ser174, Gln176, Asp326, and Lys353. Gln176 is a binding site for phosphoenolpyruvate. Residue Asp326 is the Proton acceptor of the active site. Residues Arg357 and Arg400 each contribute to the phosphoenolpyruvate site.

It belongs to the EPSP synthase family. In terms of assembly, monomer.

It localises to the cytoplasm. The enzyme catalyses 3-phosphoshikimate + phosphoenolpyruvate = 5-O-(1-carboxyvinyl)-3-phosphoshikimate + phosphate. The protein operates within metabolic intermediate biosynthesis; chorismate biosynthesis; chorismate from D-erythrose 4-phosphate and phosphoenolpyruvate: step 6/7. Catalyzes the transfer of the enolpyruvyl moiety of phosphoenolpyruvate (PEP) to the 5-hydroxyl of shikimate-3-phosphate (S3P) to produce enolpyruvyl shikimate-3-phosphate and inorganic phosphate. The polypeptide is 3-phosphoshikimate 1-carboxyvinyltransferase (Cereibacter sphaeroides (strain ATCC 17029 / ATH 2.4.9) (Rhodobacter sphaeroides)).